The primary structure comprises 79 residues: Antimicrobial peptide ToAP2 (79 aa).

Residues 1–23 (MQFKKQLLVIFFAYFLVVNESEA) form the signal peptide. The propeptide occupies 50–79 (SLMKRELKNLYDPYQRSVEMERLLKELPLY).

The protein belongs to the non-disulfide-bridged peptide (NDBP) superfamily. Medium-length antimicrobial peptide (group 3) family. Expressed by the venom gland.

The protein resides in the secreted. It is found in the target cell membrane. Antimicrobial peptide. Shows antibacterial activity against all M.massiliense bacterial strains tested. Has antifungal activity against Candida spp. and two Cryptococcus neoformans strains with MICs values ranging from 6.25 to 200 uM. Also shows an inhibitory activity on C.albicans biofilms at high concentrations. Exhibits chemotactic activity for monocytes, neutrophils, and eosinophils. Shows low cytotoxic activity and has weak hemolytic activity on human erythrocytes. In vivo, treatment of infected mice with M.massiliense reduces the bacterial load in the liver, lung, and spleen. May act by disrupting the integrity of the bacterial cell membrane. This chain is Antimicrobial peptide ToAP2, found in Tityus obscurus (Amazonian scorpion).